The following is a 116-amino-acid chain: Large ribosomal subunit protein bL19 (116 aa).

This sequence belongs to the bacterial ribosomal protein bL19 family.

In terms of biological role, this protein is located at the 30S-50S ribosomal subunit interface and may play a role in the structure and function of the aminoacyl-tRNA binding site. This Flavobacterium psychrophilum (strain ATCC 49511 / DSM 21280 / CIP 103535 / JIP02/86) protein is Large ribosomal subunit protein bL19.